Consider the following 276-residue polypeptide: uncharacterized protein (276 aa).

10 consecutive transmembrane segments (helical) span residues 5–25, 31–51, 63–83, 89–109, 119–139, 142–162, 168–188, 200–220, 231–251, and 253–273; these read IVLA…KYSV, IAIA…IIIL, VFAL…LGEV, VASV…AIFL, VGII…YANI, IALV…GKSL, PITL…PFLP, LIGS…LGWY, ASVF…ILLA, and PLTL…YIVV. 2 consecutive EamA domains span residues 12-133 and 150-274; these read TFWG…VISE and VAAA…IVVR.

It belongs to the EamA transporter family.

It is found in the cell membrane. This is an uncharacterized protein from Archaeoglobus fulgidus (strain ATCC 49558 / DSM 4304 / JCM 9628 / NBRC 100126 / VC-16).